A 631-amino-acid chain; its full sequence is tRNA uridine 5-carboxymethylaminomethyl modification enzyme MnmG (631 aa).

FAD is bound by residues glycine 15–glycine 20, isoleucine 127, and serine 182. Glycine 276 to phenylalanine 290 lines the NAD(+) pocket. Residue glutamine 373 coordinates FAD.

It belongs to the MnmG family. As to quaternary structure, homodimer. Heterotetramer of two MnmE and two MnmG subunits. Requires FAD as cofactor.

Its subcellular location is the cytoplasm. NAD-binding protein involved in the addition of a carboxymethylaminomethyl (cmnm) group at the wobble position (U34) of certain tRNAs, forming tRNA-cmnm(5)s(2)U34. The polypeptide is tRNA uridine 5-carboxymethylaminomethyl modification enzyme MnmG (Streptococcus mutans serotype c (strain ATCC 700610 / UA159)).